The sequence spans 846 residues: Inactive cap-specific mRNA (nucleoside-2'-O-)-methyltransferase 1B (846 aa).

Positions 30 to 50 (DDEDDFVDDPSPTEQKTKAEK) are disordered. The region spanning 44–90 (QKTKAEKKMERMGYKAGEGLGKNKQGIQEPIAISFREGKAGLGHEQW) is the G-patch domain. The RrmJ-type SAM-dependent 2'-O-MTase domain occupies 184 to 413 (FFLNRSAMKT…ERFVVCKGLR (230 aa)).

This chain is Inactive cap-specific mRNA (nucleoside-2'-O-)-methyltransferase 1B, found in Caenorhabditis briggsae.